The following is a 415-amino-acid chain: Serine hydroxymethyltransferase (415 aa).

Residues Leu-117 and 121-123 (GHL) contribute to the (6S)-5,6,7,8-tetrahydrofolate site. Lys-226 bears the N6-(pyridoxal phosphate)lysine mark. A (6S)-5,6,7,8-tetrahydrofolate-binding site is contributed by Glu-241.

Belongs to the SHMT family. In terms of assembly, homodimer. The cofactor is pyridoxal 5'-phosphate.

It is found in the cytoplasm. It carries out the reaction (6R)-5,10-methylene-5,6,7,8-tetrahydrofolate + glycine + H2O = (6S)-5,6,7,8-tetrahydrofolate + L-serine. The protein operates within one-carbon metabolism; tetrahydrofolate interconversion. It participates in amino-acid biosynthesis; glycine biosynthesis; glycine from L-serine: step 1/1. Functionally, catalyzes the reversible interconversion of serine and glycine with tetrahydrofolate (THF) serving as the one-carbon carrier. This reaction serves as the major source of one-carbon groups required for the biosynthesis of purines, thymidylate, methionine, and other important biomolecules. Also exhibits THF-independent aldolase activity toward beta-hydroxyamino acids, producing glycine and aldehydes, via a retro-aldol mechanism. The sequence is that of Serine hydroxymethyltransferase from Bacillus licheniformis (strain ATCC 14580 / DSM 13 / JCM 2505 / CCUG 7422 / NBRC 12200 / NCIMB 9375 / NCTC 10341 / NRRL NRS-1264 / Gibson 46).